Consider the following 591-residue polypeptide: 2-succinyl-5-enolpyruvyl-6-hydroxy-3-cyclohexene-1-carboxylate synthase (591 aa).

This sequence belongs to the TPP enzyme family. MenD subfamily. Homodimer. It depends on Mg(2+) as a cofactor. Mn(2+) serves as cofactor. Requires thiamine diphosphate as cofactor.

The enzyme catalyses isochorismate + 2-oxoglutarate + H(+) = 5-enolpyruvoyl-6-hydroxy-2-succinyl-cyclohex-3-ene-1-carboxylate + CO2. The protein operates within quinol/quinone metabolism; 1,4-dihydroxy-2-naphthoate biosynthesis; 1,4-dihydroxy-2-naphthoate from chorismate: step 2/7. Its pathway is cofactor biosynthesis; phylloquinone biosynthesis. Its function is as follows. Catalyzes the thiamine diphosphate-dependent decarboxylation of 2-oxoglutarate and the subsequent addition of the resulting succinic semialdehyde-thiamine pyrophosphate anion to isochorismate to yield 2-succinyl-5-enolpyruvyl-6-hydroxy-3-cyclohexene-1-carboxylate (SEPHCHC). This is 2-succinyl-5-enolpyruvyl-6-hydroxy-3-cyclohexene-1-carboxylate synthase from Rippkaea orientalis (strain PCC 8801 / RF-1) (Cyanothece sp. (strain PCC 8801)).